The following is a 325-amino-acid chain: Post-GPI attachment to proteins factor 2-like (325 aa).

6 helical membrane-spanning segments follow: residues 80–100 (VVTA…AYVF), 130–150 (YFWR…AFVY), 171–191 (LLIT…GGVT), 205–225 (IFIT…KLNG), 243–263 (WKKI…VFFA), and 276–296 (WFAF…FTII).

The protein belongs to the PGAP2 family.

It is found in the membrane. This is Post-GPI attachment to proteins factor 2-like from Drosophila melanogaster (Fruit fly).